The following is a 211-amino-acid chain: PITH domain-containing protein GA19395 (211 aa).

In terms of domain architecture, PITH spans 20–192 (DHALEMGIEY…GVTICNYEAR (173 aa)).

It belongs to the PITHD1 family.

The polypeptide is PITH domain-containing protein GA19395 (Drosophila pseudoobscura pseudoobscura (Fruit fly)).